The chain runs to 176 residues: Large ribosomal subunit protein uL6 (176 aa).

Positions 151 to 170 (RPPEPYKGKGVRYADEQVRR) are enriched in basic and acidic residues. The disordered stretch occupies residues 151–176 (RPPEPYKGKGVRYADEQVRRKEAKKK).

This sequence belongs to the universal ribosomal protein uL6 family. In terms of assembly, part of the 50S ribosomal subunit.

In terms of biological role, this protein binds to the 23S rRNA, and is important in its secondary structure. It is located near the subunit interface in the base of the L7/L12 stalk, and near the tRNA binding site of the peptidyltransferase center. The protein is Large ribosomal subunit protein uL6 of Shewanella piezotolerans (strain WP3 / JCM 13877).